Consider the following 184-residue polypeptide: ATP synthase subunit b, chloroplastic (184 aa).

The chain crosses the membrane as a helical span at residues 27–49 (LATNPINLSVVFGVLIFFGKGVL).

This sequence belongs to the ATPase B chain family. F-type ATPases have 2 components, F(1) - the catalytic core - and F(0) - the membrane proton channel. F(1) has five subunits: alpha(3), beta(3), gamma(1), delta(1), epsilon(1). F(0) has four main subunits: a(1), b(1), b'(1) and c(10-14). The alpha and beta chains form an alternating ring which encloses part of the gamma chain. F(1) is attached to F(0) by a central stalk formed by the gamma and epsilon chains, while a peripheral stalk is formed by the delta, b and b' chains.

It localises to the plastid. The protein resides in the chloroplast thylakoid membrane. In terms of biological role, f(1)F(0) ATP synthase produces ATP from ADP in the presence of a proton or sodium gradient. F-type ATPases consist of two structural domains, F(1) containing the extramembraneous catalytic core and F(0) containing the membrane proton channel, linked together by a central stalk and a peripheral stalk. During catalysis, ATP synthesis in the catalytic domain of F(1) is coupled via a rotary mechanism of the central stalk subunits to proton translocation. Functionally, component of the F(0) channel, it forms part of the peripheral stalk, linking F(1) to F(0). The chain is ATP synthase subunit b, chloroplastic from Arabis hirsuta (Hairy rock-cress).